Consider the following 271-residue polypeptide: uncharacterized protein (271 aa).

In terms of domain architecture, AB hydrolase-1 spans 24 to 124 (PIILLVHGGG…QVHVMIPHEP (101 aa)).

It belongs to the AB hydrolase superfamily.

This is an uncharacterized protein from Bacillus subtilis (strain 168).